The sequence spans 199 residues: Transgelin-2 (199 aa).

At Ala-2 the chain carries N-acetylalanine. Residue Ser-11 is modified to Phosphoserine. An N6-acetyllysine mark is found at Lys-17 and Lys-20. The region spanning 24–136 (ADLEQILIQW…RTLMNLGGLA (113 aa)) is the Calponin-homology (CH) domain. Ser-163 is subject to Phosphoserine. A Glycyl lysine isopeptide (Lys-Gly) (interchain with G-Cter in SUMO2) cross-link involves residue Lys-171. A Calponin-like repeat occupies 174–199 (IGLQMGTNRGASQAGMTGYGMPRQIL). At Thr-180 the chain carries Phosphothreonine. Omega-N-methylarginine is present on residues Arg-182 and Arg-196.

It belongs to the calponin family.

The protein is Transgelin-2 (Tagln2) of Mus musculus (Mouse).